We begin with the raw amino-acid sequence, 341 residues long: tRNA N6-adenosine threonylcarbamoyltransferase (341 aa).

The Fe cation site is built by His111 and His115. Substrate is bound by residues 134–138 (LVSGG), Asp167, Gly180, and Asn276. Residue Asp304 participates in Fe cation binding.

Belongs to the KAE1 / TsaD family. The cofactor is Fe(2+).

Its subcellular location is the cytoplasm. It carries out the reaction L-threonylcarbamoyladenylate + adenosine(37) in tRNA = N(6)-L-threonylcarbamoyladenosine(37) in tRNA + AMP + H(+). Functionally, required for the formation of a threonylcarbamoyl group on adenosine at position 37 (t(6)A37) in tRNAs that read codons beginning with adenine. Is involved in the transfer of the threonylcarbamoyl moiety of threonylcarbamoyl-AMP (TC-AMP) to the N6 group of A37, together with TsaE and TsaB. TsaD likely plays a direct catalytic role in this reaction. This Pseudomonas putida (strain W619) protein is tRNA N6-adenosine threonylcarbamoyltransferase.